The following is a 211-amino-acid chain: Peptide methionine sulfoxide reductase MsrA (211 aa).

Cysteine 60 is an active-site residue.

The protein belongs to the MsrA Met sulfoxide reductase family.

The enzyme catalyses L-methionyl-[protein] + [thioredoxin]-disulfide + H2O = L-methionyl-(S)-S-oxide-[protein] + [thioredoxin]-dithiol. It catalyses the reaction [thioredoxin]-disulfide + L-methionine + H2O = L-methionine (S)-S-oxide + [thioredoxin]-dithiol. In terms of biological role, has an important function as a repair enzyme for proteins that have been inactivated by oxidation. Catalyzes the reversible oxidation-reduction of methionine sulfoxide in proteins to methionine. The protein is Peptide methionine sulfoxide reductase MsrA of Methanosarcina mazei (strain ATCC BAA-159 / DSM 3647 / Goe1 / Go1 / JCM 11833 / OCM 88) (Methanosarcina frisia).